The primary structure comprises 348 residues: Mamu class I histocompatibility antigen, alpha chain F (348 aa).

Positions 1–21 are cleaved as a signal peptide; sequence MAPRTLLLVLSGALALTETWA. The segment at 22–113 is alpha-1; it reads GSHSLRYFST…LLLRYNQSEA (92 aa). At 22 to 307 the chain is on the extracellular side; the sequence is GSHSLRYFST…ESSSQPTIPI (286 aa). A glycan (N-linked (GlcNAc...) asparagine) is linked at Asn-109. The segment at 114-205 is alpha-2; the sequence is GSHTLQGMNG…ENGKETLQRA (92 aa). Cystine bridges form between Cys-124–Cys-187 and Cys-226–Cys-282. Residues 206–297 form an alpha-3 region; sequence DPPKAHVAHH…GLPQPLTLRW (92 aa). The region spanning 208–296 is the Ig-like C1-type domain; sequence PKAHVAHHPI…EGLPQPLTLR (89 aa). The tract at residues 298 to 307 is connecting peptide; that stretch reads ESSSQPTIPI. Residues 308-331 traverse the membrane as a helical segment; sequence VGIVAGLAVLAVVVTGAVVAAVMW. The Cytoplasmic segment spans residues 332 to 348; it reads RRKSSDRNRGSYSQPTM.

Belongs to the MHC class I family. As to quaternary structure, heterodimer of an alpha chain and a beta chain (beta-2-microglobulin).

It is found in the membrane. Functionally, involved in the presentation of foreign antigens to the immune system. This chain is Mamu class I histocompatibility antigen, alpha chain F (Mamu-F), found in Macaca mulatta (Rhesus macaque).